The following is a 210-amino-acid chain: Cell division protein SepF (210 aa).

This sequence belongs to the SepF family. As to quaternary structure, homodimer. Interacts with FtsZ.

Its subcellular location is the cytoplasm. Its function is as follows. Cell division protein that is part of the divisome complex and is recruited early to the Z-ring. Probably stimulates Z-ring formation, perhaps through the cross-linking of FtsZ protofilaments. Its function overlaps with FtsA. This chain is Cell division protein SepF, found in Mycobacterium leprae (strain Br4923).